Reading from the N-terminus, the 79-residue chain is MSDIGERVKKIVVEHLGVEPEKVVDAASFIDDLGADSLDTVELVMAFEEEFGCEIPDDAAETILTVGDATKFLEKNAKS.

The region spanning 2–77 (SDIGERVKKI…DATKFLEKNA (76 aa)) is the Carrier domain. The residue at position 37 (S37) is an O-(pantetheine 4'-phosphoryl)serine.

It belongs to the acyl carrier protein (ACP) family. 4'-phosphopantetheine is transferred from CoA to a specific serine of apo-ACP by AcpS. This modification is essential for activity because fatty acids are bound in thioester linkage to the sulfhydryl of the prosthetic group.

It localises to the cytoplasm. Its pathway is lipid metabolism; fatty acid biosynthesis. Its function is as follows. Carrier of the growing fatty acid chain in fatty acid biosynthesis. In Bradyrhizobium diazoefficiens (strain JCM 10833 / BCRC 13528 / IAM 13628 / NBRC 14792 / USDA 110), this protein is Acyl carrier protein.